The chain runs to 85 residues: Translation initiation factor IF-1 1 (85 aa).

Residues 1–72 (MAKEELIEMS…SKGRITFRHL (72 aa)) form the S1-like domain.

It belongs to the IF-1 family. As to quaternary structure, component of the 30S ribosomal translation pre-initiation complex which assembles on the 30S ribosome in the order IF-2 and IF-3, IF-1 and N-formylmethionyl-tRNA(fMet); mRNA recruitment can occur at any time during PIC assembly.

The protein resides in the cytoplasm. Its function is as follows. One of the essential components for the initiation of protein synthesis. Stabilizes the binding of IF-2 and IF-3 on the 30S subunit to which N-formylmethionyl-tRNA(fMet) subsequently binds. Helps modulate mRNA selection, yielding the 30S pre-initiation complex (PIC). Upon addition of the 50S ribosomal subunit IF-1, IF-2 and IF-3 are released leaving the mature 70S translation initiation complex. The chain is Translation initiation factor IF-1 1 from Aromatoleum aromaticum (strain DSM 19018 / LMG 30748 / EbN1) (Azoarcus sp. (strain EbN1)).